Reading from the N-terminus, the 1253-residue chain is Myosin heavy chain 95F (1253 aa).

Positions 3–54 constitute a Myosin N-terminal SH3-like domain; sequence EDTQLVWVRDAAEGYIQGRITEIGAKEFEVTPTDRKYPKRTCHFDDIHSSCD. In terms of domain architecture, Myosin motor spans 57-766; the sequence is QDHDDNCELM…KFVEFDRIMR (710 aa). 151 to 158 serves as a coordination point for ATP; that stretch reads GESGAGKT. The interval 647 to 666 is actin-binding; that stretch reads GELMEKLEQNGTNFIRCIKP. The IQ domain maps to 808–837; sequence RNKCVLIAQRIARGFLARKQHRPRYQGIGK. A coiled-coil region spans residues 900 to 1022; the sequence is ANMNKLTVDL…LRLANESNGQ (123 aa). Residues 1187-1193 form a hydrophobic region region; it reads PILLVAG. The segment at 1233–1253 is disordered; that stretch reads AYKNLGAAKPNGPAAAMQKQQ.

The protein belongs to the TRAFAC class myosin-kinesin ATPase superfamily. Myosin family. In terms of tissue distribution, isoform B is present at a higher level in the head and gonads than in the thoraxes. Isoform 145 kDa is found only in the head. CLIP-190 and jar are coexpressed at several times in development and in a number of tissues, including embryonic axonal neuron processes and posterior pole.

It is found in the cytoplasm. The protein resides in the cytoskeleton. Its function is as follows. Myosin is a protein that binds to actin and has ATPase activity that is activated by actin. Together CLIP-190 and jar may coordinate the interaction between the actin and microtubule cytoskeleton. May link endocytic vesicles to microtubules and may be involved in transport in the early embryo and in the dynamic process of dorsal closure. It is believed that its function changes during the life cycle. This Drosophila melanogaster (Fruit fly) protein is Myosin heavy chain 95F (jar).